A 650-amino-acid polypeptide reads, in one-letter code: Probable potassium transport system protein Kup 1 (650 aa).

A run of 12 helical transmembrane segments spans residues 12-32 (GLLIAIGIVYGDIGTSPLYVM), 54-74 (ISLVLWTVTLLTTLQTVIIAL), 97-117 (WLVLPALIGGAAILADGTLTP), 139-159 (VSSQSMVIAITVLILLVLFSI), 170-190 (AFGPIMFVWFTFLGVIGLINM), 216-236 (AGIFILGSIFLATTGAEALYS), 249-269 (SWPFVFVCLSLNYFGQGVWIL), 295-315 (LAAIILATIAAVIASQALITG), 344-364 (IYIPSINKGICVATIAIVLYF), 375-395 (GLSITISMLMTTILLYEWLAM), 400-420 (PVWNWIFLIFFGVLDIMFMIS), and 428-448 (GGYVSLFIAGAIGFIMYVWYY).

This sequence belongs to the HAK/KUP transporter (TC 2.A.72) family.

It is found in the cell membrane. It carries out the reaction K(+)(in) + H(+)(in) = K(+)(out) + H(+)(out). In terms of biological role, transport of potassium into the cell. Likely operates as a K(+):H(+) symporter. This Lactobacillus acidophilus (strain ATCC 700396 / NCK56 / N2 / NCFM) protein is Probable potassium transport system protein Kup 1.